A 184-amino-acid polypeptide reads, in one-letter code: Peptidyl-tRNA hydrolase (184 aa).

Residue Y14 participates in tRNA binding. The active-site Proton acceptor is the H19. Positions 64, 66, and 112 each coordinate tRNA.

Belongs to the PTH family. As to quaternary structure, monomer.

Its subcellular location is the cytoplasm. The catalysed reaction is an N-acyl-L-alpha-aminoacyl-tRNA + H2O = an N-acyl-L-amino acid + a tRNA + H(+). In terms of biological role, hydrolyzes ribosome-free peptidyl-tRNAs (with 1 or more amino acids incorporated), which drop off the ribosome during protein synthesis, or as a result of ribosome stalling. Its function is as follows. Catalyzes the release of premature peptidyl moieties from peptidyl-tRNA molecules trapped in stalled 50S ribosomal subunits, and thus maintains levels of free tRNAs and 50S ribosomes. This chain is Peptidyl-tRNA hydrolase, found in Thermoanaerobacter sp. (strain X514).